The primary structure comprises 143 residues: Putative pre-16S rRNA nuclease (143 aa).

This sequence belongs to the YqgF nuclease family.

The protein localises to the cytoplasm. Functionally, could be a nuclease involved in processing of the 5'-end of pre-16S rRNA. This Salinibacter ruber (strain DSM 13855 / M31) protein is Putative pre-16S rRNA nuclease.